The following is a 553-amino-acid chain: Keratin, type II cytoskeletal 73 (553 aa).

Positions 1 to 130 (MNRQFTCKSG…DPEIQKVRAQ (130 aa)) are head. Residues 131-166 (EREQIKALNNKFASFIDKVRFLEQQNQVLQTKWELL) are coil 1A. The region spanning 131 to 444 (EREQIKALNN…KLLEGEECRM (314 aa)) is the IF rod domain. The interval 167-185 (QQLDLSNCRRNLEPVYEAH) is linker 1. Positions 186 to 277 (ISSLQKQLDS…CLYEGEITQM (92 aa)) are coil 1B. The segment at 278-301 (QSHISDTSVVLSMDNNRNLDLDSI) is linker 12. The coil 2 stretch occupies residues 302–440 (IAEVRAQYED…ATYRKLLEGE (139 aa)). Residues 441 to 539 (ECRMSGEHTN…LGSPSKKTMR (99 aa)) form a tail region.

Belongs to the intermediate filament family. Heterotetramer of two type I and two type II keratins.

In terms of biological role, has a role in hair formation. Specific component of keratin intermediate filaments in the inner root sheath (IRS) of the hair follicle. The protein is Keratin, type II cytoskeletal 73 (Krt73) of Rattus norvegicus (Rat).